The primary structure comprises 92 residues: Small ribosomal subunit protein uS19 (92 aa).

The protein belongs to the universal ribosomal protein uS19 family.

In terms of biological role, protein S19 forms a complex with S13 that binds strongly to the 16S ribosomal RNA. This Photorhabdus laumondii subsp. laumondii (strain DSM 15139 / CIP 105565 / TT01) (Photorhabdus luminescens subsp. laumondii) protein is Small ribosomal subunit protein uS19.